Consider the following 93-residue polypeptide: Phosphoribosyl-ATP pyrophosphatase (93 aa).

The protein belongs to the PRA-PH family.

Its subcellular location is the cytoplasm. It catalyses the reaction 1-(5-phospho-beta-D-ribosyl)-ATP + H2O = 1-(5-phospho-beta-D-ribosyl)-5'-AMP + diphosphate + H(+). Its pathway is amino-acid biosynthesis; L-histidine biosynthesis; L-histidine from 5-phospho-alpha-D-ribose 1-diphosphate: step 2/9. This chain is Phosphoribosyl-ATP pyrophosphatase, found in Mycolicibacterium smegmatis (strain ATCC 700084 / mc(2)155) (Mycobacterium smegmatis).